The following is a 199-amino-acid chain: Recombination protein RecR (199 aa).

The segment at 58–73 (CKTCGNIDTQSPCTVC) adopts a C4-type zinc-finger fold. In terms of domain architecture, Toprim spans 81 to 176 (AMIVVVADVA…KVTRLAHGVP (96 aa)).

The protein belongs to the RecR family.

May play a role in DNA repair. It seems to be involved in an RecBC-independent recombinational process of DNA repair. It may act with RecF and RecO. The sequence is that of Recombination protein RecR from Bradyrhizobium sp. (strain ORS 278).